The chain runs to 318 residues: Protein-L-histidine N-pros-methyltransferase (318 aa).

The first 18 residues, 1–18 (MRLLAGWLCLSLASVWLA), serve as a signal peptide directing secretion. A glycan (N-linked (GlcNAc...) asparagine) is linked at Asn35. Positions 174, 210, and 295 each coordinate S-adenosyl-L-homocysteine.

Belongs to the METTL9 family.

It localises to the endoplasmic reticulum. The protein resides in the mitochondrion. It carries out the reaction L-histidyl-[protein] + S-adenosyl-L-methionine = N(pros)-methyl-L-histidyl-[protein] + S-adenosyl-L-homocysteine + H(+). Protein-histidine N-methyltransferase that specifically catalyzes 1-methylhistidine (pros-methylhistidine) methylation of target proteins. Specifically methylates the second His of proteins with a His-x-His (HxH) motif (where 'x' is preferably a small amino acid), while exploiting the first one as a recognition signature. Catalyzes methylation of target proteins such as S100A9, NDUFB3, SLC39A5, SLC39A7, ARMC6 and DNAJB12; 1-methylhistidine modification may affect the binding of zinc and other metals to its target proteins. Constitutes the main methyltransferase for the 1-methylhistidine modification in cell. The chain is Protein-L-histidine N-pros-methyltransferase from Homo sapiens (Human).